The following is a 558-amino-acid chain: uncharacterized protein (558 aa).

The next 5 membrane-spanning stretches (helical) occupy residues 15–32 (PSVT…ALGL), 39–61 (IGTI…HFGV), 76–95 (LVIF…FPSL), 104–126 (LISL…ILGI), and 166–188 (MALA…LALL). 2 consecutive RCK C-terminal domains span residues 196 to 278 (EERD…LFGK) and 286 to 370 (RPDI…ILGD). Helical transmembrane passes span 383–405 (LFGG…GVSM), 409–426 (LGLA…GAFG), 446–468 (FGII…DTII), 473–495 (LLWV…WASI), and 533–555 (VVYA…IMIL).

It belongs to the AAE transporter (TC 2.A.81) family.

It localises to the cell membrane. This is an uncharacterized protein from Porphyromonas gingivalis (strain ATCC BAA-308 / W83).